The sequence spans 141 residues: MAIERTISIIKPDAVGKNVIGKIYSRFEENGLKIVAAKMKQLTLKEAQEFYAVHKDRPFYAGLVEFMTGGPVMIQVLEGENAVLKNRELMGATNPSEAAEGTIRADFATSVSINAVHGSDSVENAALEIAYFFSQTEICPR.

Residues Lys11, Phe59, Arg87, Thr93, Arg104, and Asn114 each contribute to the ATP site. The active-site Pros-phosphohistidine intermediate is His117.

This sequence belongs to the NDK family. Homotetramer. The cofactor is Mg(2+).

It localises to the cytoplasm. It carries out the reaction a 2'-deoxyribonucleoside 5'-diphosphate + ATP = a 2'-deoxyribonucleoside 5'-triphosphate + ADP. The catalysed reaction is a ribonucleoside 5'-diphosphate + ATP = a ribonucleoside 5'-triphosphate + ADP. Its function is as follows. Major role in the synthesis of nucleoside triphosphates other than ATP. The ATP gamma phosphate is transferred to the NDP beta phosphate via a ping-pong mechanism, using a phosphorylated active-site intermediate. The protein is Nucleoside diphosphate kinase of Neisseria meningitidis serogroup A / serotype 4A (strain DSM 15465 / Z2491).